Consider the following 170-residue polypeptide: uncharacterized protein (170 aa).

This is an uncharacterized protein from Ureaplasma parvum serovar 3 (strain ATCC 700970).